Here is a 668-residue protein sequence, read N- to C-terminus: Protein-glutamine gamma-glutamyltransferase (668 aa).

Topologically, residues 1–6 (MNAIPR) are cytoplasmic. Residues 7-27 (VALVWLLVAQVLVILPHLAYM) form a helical membrane-spanning segment. Residues 28–50 (PLWIAAMWLGCAAWRVQVFRMRA) are Periplasmic-facing. Residues 51-71 (GYPRAWVKLALALLAGAGVWL) form a helical membrane-spanning segment. The Cytoplasmic portion of the chain corresponds to 72-74 (SRG). The helical transmembrane segment at 75-95 (SLVGLDAGAVLLIAAFILKLV) threads the bilayer. The Periplasmic portion of the chain corresponds to 96-103 (EMKTRRDA). 2 helical membrane-spanning segments follow: residues 104 to 124 (LVLV…DDGF) and 125 to 145 (LAAL…IGLQ). Residues 146–158 (QSAFASRPWPTLR) lie on the Cytoplasmic side of the membrane. Residues 159–179 (LAGGLLLQALPLMLLLFLFFP) form a helical membrane-spanning segment. Topologically, residues 180-548 (RLGPLWSLPM…FGGLDPTRLG (369 aa)) are periplasmic. Cys404 acts as the Nucleophile in catalysis. Active-site residues include His448 and Asp464. Residues 549 to 569 (LLLGAAAILSVGLLALFLLKP) form a helical membrane-spanning segment. The Cytoplasmic segment spans residues 570-668 (WQGRGDLRSR…TRDGRGEEQA (99 aa)).

This sequence belongs to the transglutaminase-like superfamily.

It localises to the cell inner membrane. It carries out the reaction L-glutaminyl-[protein] + L-lysyl-[protein] = [protein]-L-lysyl-N(6)-5-L-glutamyl-[protein] + NH4(+). Functionally, displays transglutaminase activity (TGase) in vitro. Plays a critical role in the viability of P.aeruginosa. Might contribute to an essential function linked to the cell wall. This Pseudomonas aeruginosa (strain ATCC 15692 / DSM 22644 / CIP 104116 / JCM 14847 / LMG 12228 / 1C / PRS 101 / PAO1) protein is Protein-glutamine gamma-glutamyltransferase (tgpA).